The sequence spans 507 residues: Probable Xaa-Pro aminopeptidase TRV_02643 (507 aa).

Positions 275, 286, 434, and 478 each coordinate Mn(2+).

Belongs to the peptidase M24B family. Requires Mn(2+) as cofactor.

The catalysed reaction is Release of any N-terminal amino acid, including proline, that is linked to proline, even from a dipeptide or tripeptide.. Its function is as follows. Catalyzes the removal of a penultimate prolyl residue from the N-termini of peptides. This chain is Probable Xaa-Pro aminopeptidase TRV_02643, found in Trichophyton verrucosum (strain HKI 0517).